The chain runs to 322 residues: Porphobilinogen deaminase (322 aa).

Cys-254 is subject to S-(dipyrrolylmethanemethyl)cysteine.

This sequence belongs to the HMBS family. As to quaternary structure, monomer. It depends on dipyrromethane as a cofactor.

It catalyses the reaction 4 porphobilinogen + H2O = hydroxymethylbilane + 4 NH4(+). It participates in porphyrin-containing compound metabolism; protoporphyrin-IX biosynthesis; coproporphyrinogen-III from 5-aminolevulinate: step 2/4. Functionally, tetrapolymerization of the monopyrrole PBG into the hydroxymethylbilane pre-uroporphyrinogen in several discrete steps. The polypeptide is Porphobilinogen deaminase (Methylococcus capsulatus (strain ATCC 33009 / NCIMB 11132 / Bath)).